Reading from the N-terminus, the 57-residue chain is Small ribosomal subunit protein bS21 (57 aa).

The segment at 35 to 57 (REHYEKPSVKRKKKAEAARKKKF) is disordered. Residues 43–57 (VKRKKKAEAARKKKF) are compositionally biased toward basic residues.

It belongs to the bacterial ribosomal protein bS21 family.

This chain is Small ribosomal subunit protein bS21, found in Alkaliphilus metalliredigens (strain QYMF).